The following is a 700-amino-acid chain: Methionine--tRNA ligase (700 aa).

Positions 13–23 (PYANGDIHLGH) match the 'HIGH' region motif. 4 residues coordinate Zn(2+): C144, C147, C157, and C160. The 'KMSKS' region signature appears at 341 to 345 (KMSKS). An ATP-binding site is contributed by K344. Residues 598–700 (DFAKVEMKVA…DNCVIGDLLA (103 aa)) enclose the tRNA-binding domain.

The protein belongs to the class-I aminoacyl-tRNA synthetase family. MetG type 1 subfamily. As to quaternary structure, homodimer. Requires Zn(2+) as cofactor.

The protein resides in the cytoplasm. It carries out the reaction tRNA(Met) + L-methionine + ATP = L-methionyl-tRNA(Met) + AMP + diphosphate. In terms of biological role, is required not only for elongation of protein synthesis but also for the initiation of all mRNA translation through initiator tRNA(fMet) aminoacylation. The protein is Methionine--tRNA ligase of Psychrobacter arcticus (strain DSM 17307 / VKM B-2377 / 273-4).